Consider the following 65-residue polypeptide: MKLKITLTKSLIACRFNQIKTAHCLGLKKINNQVIKDDTPAIHGMIKTISHLVVVEKVSYTKEQK.

The protein belongs to the universal ribosomal protein uL30 family. Part of the 50S ribosomal subunit.

The protein is Large ribosomal subunit protein uL30 of Aster yellows witches'-broom phytoplasma (strain AYWB).